The following is a 1449-amino-acid chain: Gag-Pol polyprotein (1449 aa).

Gly-2 carries N-myristoyl glycine; by host lipidation. The interval 7–31 is interaction with Gp41; the sequence is VLTGGKLDQWESIYLRPGGKKKYRM. Positions 8-43 are interaction with host CALM1; sequence LTGGKLDQWESIYLRPGGKKKYRMKHLVWASRELER. The segment at 12 to 19 is interaction with host AP3D1; it reads KLDQWESI. Residues 14 to 33 form an interaction with membrane phosphatidylinositol 4,5-bisphosphate and RNA region; it reads DQWESIYLRPGGKKKYRMKH. The Nuclear export signal motif lies at 16-22; the sequence is WESIYLR. A Nuclear localization signal motif is present at residues 26–32; the sequence is KKKYRMK. Residues 73 to 77 are interaction with membrane phosphatidylinositol 4,5-bisphosphate; that stretch reads EELRS. Tyr-134 is subject to Phosphotyrosine; by host. An interaction with human PPIA/CYPA and NUP153 region spans residues 191–229; sequence NTVGGHQAAMQMLKEVINEEAADWDRTHPVPVGPLPPGQ. A dimerization/Multimerization of capsid protein p24 region spans residues 279 to 365; that stretch reads YSPVSILEIK…GGPAHKARVL (87 aa). 2 consecutive CCHC-type zinc fingers follow at residues 393–410 and 414–431; these read IKCF…NCKA and GGCW…DCKN. Positions 447-461 are enriched in basic and acidic residues; it reads ETRKLPPDNNKERAH. The tract at residues 447–489 is disordered; the sequence is ETRKLPPDNNKERAHSPATRELWVSGGEEHTGEGDAGEPGEDR. The tract at residues 499-503 is dimerization of protease; it reads PQITL. The region spanning 518-587 is the Peptidase A2 domain; sequence REALLDTGAD…TPVNIIGRNL (70 aa). The active-site For protease activity; shared with dimeric partner is Asp-523. Dimerization of protease stretches follow at residues 547–553 and 586–598; these read GIGGFIK and NLLT…LNFP. Residues 641-831 enclose the Reverse transcriptase domain; sequence EGKISRIGPE…PPFLWMGYEL (191 aa). Mg(2+) is bound by residues Asp-707, Asp-782, and Asp-783. Residues 824–832 are RT 'primer grip'; that stretch reads FLWMGYELH. The Tryptophan repeat motif signature appears at 995–1011; the sequence is WEAWWTDHWQATWIPEW. The region spanning 1031–1154 is the RNase H type-1 domain; the sequence is ISGAETFYVD…VDKLVSSGIR (124 aa). Asp-1040, Glu-1075, Asp-1095, and Asp-1146 together coordinate Mg(2+). The Integrase-type zinc-finger motif lies at 1160–1201; that stretch reads DGIEKAQEDHDRYHSNWKAMASDFNLPPIVAKEIVASCDKCQ. Positions 1169, 1173, 1197, and 1200 each coordinate Zn(2+). The 151-residue stretch at 1211–1361 folds into the Integrase catalytic domain; it reads VNCSPGVWQL…TAGERIIDII (151 aa). Mg(2+) contacts are provided by Asp-1221, Asp-1273, and Glu-1309. Residues 1380-1427 constitute a DNA-binding region (integrase-type); sequence FRVYYRDSRDPIWKGPAKLLWKGEGAVVIQDNGDIKVVPRRKAKIIRD.

In terms of assembly, homotrimer; further assembles as hexamers of trimers. Interacts with gp41 (via C-terminus). Interacts with host CALM1; this interaction induces a conformational change in the Matrix protein, triggering exposure of the myristate group. Interacts with host AP3D1; this interaction allows the polyprotein trafficking to multivesicular bodies during virus assembly. Part of the pre-integration complex (PIC) which is composed of viral genome, matrix protein, Vpr and integrase. As to quaternary structure, homodimer; the homodimer further multimerizes as homohexamers or homopentamers. Interacts with human PPIA/CYPA; This interaction stabilizes the capsid. Interacts with human NUP153. Interacts with host PDZD8; this interaction stabilizes the capsid. Interacts with monkey TRIM5; this interaction destabilizes the capsid. Homodimer, whose active site consists of two apposed aspartic acid residues. In terms of assembly, heterodimer of p66 RT and p51 RT (RT p66/p51). Heterodimerization of RT is essential for DNA polymerase activity. The overall folding of the subdomains is similar in p66 RT and p51 RT but the spatial arrangements of the subdomains are dramatically different. As to quaternary structure, homotetramer; may further associate as a homohexadecamer. Part of the pre-integration complex (PIC) which is composed of viral genome, matrix protein, Vpr and integrase. Interacts with human SMARCB1/INI1 and human PSIP1/LEDGF isoform 1. Interacts with human KPNA3; this interaction might play a role in nuclear import of the pre-integration complex. Interacts with human NUP153; this interaction might play a role in nuclear import of the pre-integration complex. Mg(2+) is required as a cofactor. Specific enzymatic cleavages by the viral protease yield mature proteins. The protease is released by autocatalytic cleavage. The polyprotein is cleaved during and after budding, this process is termed maturation. Proteolytic cleavage of p66 RT removes the RNase H domain to yield the p51 RT subunit. Nucleocapsid protein p7 might be further cleaved after virus entry. Post-translationally, tyrosine phosphorylated presumably in the virion by a host kinase. Phosphorylation is apparently not a major regulator of membrane association. In terms of processing, phosphorylated possibly by host MAPK1; this phosphorylation is necessary for Pin1-mediated virion uncoating. Methylated by host PRMT6, impairing its function by reducing RNA annealing and the initiation of reverse transcription.

The protein resides in the host cell membrane. It is found in the host endosome. Its subcellular location is the host multivesicular body. It localises to the virion membrane. The protein localises to the host nucleus. The protein resides in the host cytoplasm. It is found in the virion. The catalysed reaction is Specific for a P1 residue that is hydrophobic, and P1' variable, but often Pro.. It catalyses the reaction Endohydrolysis of RNA in RNA/DNA hybrids. Three different cleavage modes: 1. sequence-specific internal cleavage of RNA. Human immunodeficiency virus type 1 and Moloney murine leukemia virus enzymes prefer to cleave the RNA strand one nucleotide away from the RNA-DNA junction. 2. RNA 5'-end directed cleavage 13-19 nucleotides from the RNA end. 3. DNA 3'-end directed cleavage 15-20 nucleotides away from the primer terminus.. The enzyme catalyses 3'-end directed exonucleolytic cleavage of viral RNA-DNA hybrid.. It carries out the reaction DNA(n) + a 2'-deoxyribonucleoside 5'-triphosphate = DNA(n+1) + diphosphate. Protease: The viral protease is inhibited by many synthetic protease inhibitors (PIs), such as amprenavir, atazanavir, indinavir, loprinavir, nelfinavir, ritonavir and saquinavir. Use of protease inhibitors in tritherapy regimens permit more ambitious therapeutic strategies. Reverse transcriptase/ribonuclease H: RT can be inhibited either by nucleoside RT inhibitors (NRTIs) or by non nucleoside RT inhibitors (NNRTIs). NRTIs act as chain terminators, whereas NNRTIs inhibit DNA polymerization by binding a small hydrophobic pocket near the RT active site and inducing an allosteric change in this region. Classical NRTIs are abacavir, adefovir (PMEA), didanosine (ddI), lamivudine (3TC), stavudine (d4T), tenofovir (PMPA), zalcitabine (ddC), and zidovudine (AZT). Classical NNRTIs are atevirdine (BHAP U-87201E), delavirdine, efavirenz (DMP-266), emivirine (I-EBU), and nevirapine (BI-RG-587). The tritherapies used as a basic effective treatment of AIDS associate two NRTIs and one NNRTI. In terms of biological role, mediates, with Gag polyprotein, the essential events in virion assembly, including binding the plasma membrane, making the protein-protein interactions necessary to create spherical particles, recruiting the viral Env proteins, and packaging the genomic RNA via direct interactions with the RNA packaging sequence (Psi). Gag-Pol polyprotein may regulate its own translation, by the binding genomic RNA in the 5'-UTR. At low concentration, the polyprotein would promote translation, whereas at high concentration, the polyprotein would encapsidate genomic RNA and then shut off translation. Its function is as follows. Targets the polyprotein to the plasma membrane via a multipartite membrane-binding signal, that includes its myristoylated N-terminus. Matrix protein is part of the pre-integration complex. Implicated in the release from host cell mediated by Vpu. Binds to RNA. Functionally, forms the conical core that encapsulates the genomic RNA-nucleocapsid complex in the virion. Most core are conical, with only 7% tubular. The core is constituted by capsid protein hexamer subunits. The core is disassembled soon after virion entry. Host restriction factors such as TRIM5-alpha or TRIMCyp bind retroviral capsids and cause premature capsid disassembly, leading to blocks in reverse transcription. Capsid restriction by TRIM5 is one of the factors which restricts HIV-1 to the human species. Host PIN1 apparently facilitates the virion uncoating. On the other hand, interactions with PDZD8 or CYPA stabilize the capsid. Encapsulates and protects viral dimeric unspliced genomic RNA (gRNA). Binds these RNAs through its zinc fingers. Acts as a nucleic acid chaperone which is involved in rearangement of nucleic acid secondary structure during gRNA retrotranscription. Also facilitates template switch leading to recombination. As part of the polyprotein, participates in gRNA dimerization, packaging, tRNA incorporation and virion assembly. In terms of biological role, aspartyl protease that mediates proteolytic cleavages of Gag and Gag-Pol polyproteins during or shortly after the release of the virion from the plasma membrane. Cleavages take place as an ordered, step-wise cascade to yield mature proteins. This process is called maturation. Displays maximal activity during the budding process just prior to particle release from the cell. Also cleaves Nef and Vif, probably concomitantly with viral structural proteins on maturation of virus particles. Hydrolyzes host EIF4GI and PABP1 in order to shut off the capped cellular mRNA translation. The resulting inhibition of cellular protein synthesis serves to ensure maximal viral gene expression and to evade host immune response. Also mediates cleavage of host YTHDF3. Mediates cleavage of host CARD8, thereby activating the CARD8 inflammasome, leading to the clearance of latent HIV-1 in patient CD4(+) T-cells after viral reactivation; in contrast, HIV-1 can evade CARD8-sensing when its protease remains inactive in infected cells prior to viral budding. Its function is as follows. Multifunctional enzyme that converts the viral RNA genome into dsDNA in the cytoplasm, shortly after virus entry into the cell. This enzyme displays a DNA polymerase activity that can copy either DNA or RNA templates, and a ribonuclease H (RNase H) activity that cleaves the RNA strand of RNA-DNA heteroduplexes in a partially processive 3' to 5' endonucleasic mode. Conversion of viral genomic RNA into dsDNA requires many steps. A tRNA(3)-Lys binds to the primer-binding site (PBS) situated at the 5'-end of the viral RNA. RT uses the 3' end of the tRNA primer to perform a short round of RNA-dependent minus-strand DNA synthesis. The reading proceeds through the U5 region and ends after the repeated (R) region which is present at both ends of viral RNA. The portion of the RNA-DNA heteroduplex is digested by the RNase H, resulting in a ssDNA product attached to the tRNA primer. This ssDNA/tRNA hybridizes with the identical R region situated at the 3' end of viral RNA. This template exchange, known as minus-strand DNA strong stop transfer, can be either intra- or intermolecular. RT uses the 3' end of this newly synthesized short ssDNA to perform the RNA-dependent minus-strand DNA synthesis of the whole template. RNase H digests the RNA template except for two polypurine tracts (PPTs) situated at the 5'-end and near the center of the genome. It is not clear if both polymerase and RNase H activities are simultaneous. RNase H probably can proceed both in a polymerase-dependent (RNA cut into small fragments by the same RT performing DNA synthesis) and a polymerase-independent mode (cleavage of remaining RNA fragments by free RTs). Secondly, RT performs DNA-directed plus-strand DNA synthesis using the PPTs that have not been removed by RNase H as primers. PPTs and tRNA primers are then removed by RNase H. The 3' and 5' ssDNA PBS regions hybridize to form a circular dsDNA intermediate. Strand displacement synthesis by RT to the PBS and PPT ends produces a blunt ended, linear dsDNA copy of the viral genome that includes long terminal repeats (LTRs) at both ends. Functionally, catalyzes viral DNA integration into the host chromosome, by performing a series of DNA cutting and joining reactions. This enzyme activity takes place after virion entry into a cell and reverse transcription of the RNA genome in dsDNA. The first step in the integration process is 3' processing. This step requires a complex comprising the viral genome, matrix protein, Vpr and integrase. This complex is called the pre-integration complex (PIC). The integrase protein removes 2 nucleotides from each 3' end of the viral DNA, leaving recessed CA OH's at the 3' ends. In the second step, the PIC enters cell nucleus. This process is mediated through integrase and Vpr proteins, and allows the virus to infect a non dividing cell. This ability to enter the nucleus is specific of lentiviruses, other retroviruses cannot and rely on cell division to access cell chromosomes. In the third step, termed strand transfer, the integrase protein joins the previously processed 3' ends to the 5' ends of strands of target cellular DNA at the site of integration. The 5'-ends are produced by integrase-catalyzed staggered cuts, 5 bp apart. A Y-shaped, gapped, recombination intermediate results, with the 5'-ends of the viral DNA strands and the 3' ends of target DNA strands remaining unjoined, flanking a gap of 5 bp. The last step is viral DNA integration into host chromosome. This involves host DNA repair synthesis in which the 5 bp gaps between the unjoined strands are filled in and then ligated. Since this process occurs at both cuts flanking the HIV genome, a 5 bp duplication of host DNA is produced at the ends of HIV-1 integration. Alternatively, Integrase may catalyze the excision of viral DNA just after strand transfer, this is termed disintegration. This is Gag-Pol polyprotein (gag-pol) from Human immunodeficiency virus type 1 group N (isolate YBF30) (HIV-1).